The primary structure comprises 423 residues: Putative competence-damage inducible protein (423 aa).

The protein belongs to the CinA family.

In Streptococcus pyogenes serotype M18 (strain MGAS8232), this protein is Putative competence-damage inducible protein.